A 458-amino-acid chain; its full sequence is ATP synthase subunit beta (458 aa).

ATP is bound at residue 148–155; the sequence is GGAGVGKT.

The protein belongs to the ATPase alpha/beta chains family. As to quaternary structure, F-type ATPases have 2 components, CF(1) - the catalytic core - and CF(0) - the membrane proton channel. CF(1) has five subunits: alpha(3), beta(3), gamma(1), delta(1), epsilon(1). CF(0) has three main subunits: a(1), b(2) and c(9-12). The alpha and beta chains form an alternating ring which encloses part of the gamma chain. CF(1) is attached to CF(0) by a central stalk formed by the gamma and epsilon chains, while a peripheral stalk is formed by the delta and b chains.

Its subcellular location is the cell inner membrane. It catalyses the reaction ATP + H2O + 4 H(+)(in) = ADP + phosphate + 5 H(+)(out). Functionally, produces ATP from ADP in the presence of a proton gradient across the membrane. The catalytic sites are hosted primarily by the beta subunits. This Francisella tularensis subsp. holarctica (strain FTNF002-00 / FTA) protein is ATP synthase subunit beta.